Here is a 406-residue protein sequence, read N- to C-terminus: Uronyl 2-sulfotransferase (406 aa).

The Cytoplasmic portion of the chain corresponds to 1 to 49; it reads MKKKQQHPGGGADPWPHGAPMGGAPPGLGSWKRRVPLLPFLRFSLRDYG. A helical; Signal-anchor for type II membrane protein transmembrane segment spans residues 50 to 70; that stretch reads FCMATLLVFCLGSLLYQLSGG. Over 71–406 the chain is Lumenal; it reads PPRFLLDLRQ…EKWLEDIYKR (336 aa). Residues Asn-84, Asn-140, and Asn-155 are each glycosylated (N-linked (GlcNAc...) asparagine). His-168 is an active-site residue. N-linked (GlcNAc...) asparagine glycans are attached at residues Asn-173 and Asn-319. The segment covering 387–399 has biased composition (acidic residues); that stretch reads EPIDDEEQDDEKW. The interval 387-406 is disordered; it reads EPIDDEEQDDEKWLEDIYKR.

This sequence belongs to the sulfotransferase 3 family. Widely expressed.

It is found in the golgi apparatus membrane. Its function is as follows. Sulfotransferase that catalyzes the transfer of sulfate to the position 2 of uronyl residues in glycosaminoglycan chains. Has mainly activity toward iduronyl residues in dermatan sulfate, and weaker activity toward glucuronyl residues of chondroitin sulfate. Has little to no activity toward desulfated N-resulfated heparin or N-sulfoheparosan. This chain is Uronyl 2-sulfotransferase, found in Homo sapiens (Human).